The primary structure comprises 83 residues: Cytochrome b559 subunit alpha (83 aa).

A helical membrane pass occupies residues 21–35 (VIHSITIPSLFIAGW). Histidine 23 contributes to the heme binding site.

The protein belongs to the PsbE/PsbF family. As to quaternary structure, heterodimer of an alpha subunit and a beta subunit. PSII is composed of 1 copy each of membrane proteins PsbA, PsbB, PsbC, PsbD, PsbE, PsbF, PsbH, PsbI, PsbJ, PsbK, PsbL, PsbM, PsbT, PsbX, PsbY, PsbZ, Psb30/Ycf12, at least 3 peripheral proteins of the oxygen-evolving complex and a large number of cofactors. It forms dimeric complexes. Heme b is required as a cofactor.

It localises to the plastid. The protein resides in the chloroplast thylakoid membrane. In terms of biological role, this b-type cytochrome is tightly associated with the reaction center of photosystem II (PSII). PSII is a light-driven water:plastoquinone oxidoreductase that uses light energy to abstract electrons from H(2)O, generating O(2) and a proton gradient subsequently used for ATP formation. It consists of a core antenna complex that captures photons, and an electron transfer chain that converts photonic excitation into a charge separation. In Oenothera berteroana (Bertero's evening primrose), this protein is Cytochrome b559 subunit alpha.